A 132-amino-acid polypeptide reads, in one-letter code: Fibroblast growth factor 1 (132 aa).

Heparin-binding positions include Asn10 and Lys108–Lys120.

The protein belongs to the heparin-binding growth factors family.

It is found in the secreted. Its subcellular location is the cytoplasm. The protein resides in the cell cortex. The protein localises to the cytosol. It localises to the nucleus. Functionally, plays an important role in the regulation of cell survival, cell division, angiogenesis, cell differentiation and cell migration. Functions as a potent mitogen in vitro. Acts as a ligand for FGFR1 and integrins. Binds to FGFR1 in the presence of heparin leading to FGFR1 dimerization and activation via sequential autophosphorylation on tyrosine residues which act as docking sites for interacting proteins, leading to the activation of several signaling cascades. Binds to integrins. Its binding to integrins and subsequent ternary complex formation with integrins and FGFR1 are essential for FGF1 signaling. The chain is Fibroblast growth factor 1 (fgf1) from Notophthalmus viridescens (Eastern newt).